The primary structure comprises 21 residues: Protein YliM (21 aa).

The protein is Protein YliM of Escherichia coli (strain K12).